The sequence spans 74 residues: MGNEFRVCDDCQATNVKTLIPKLKKVDSCATIEVACQSYCGPGRKKSFAFVNNRPVAAPTEDELIVKIEAKLNK.

The protein belongs to the UPF0741 family.

The sequence is that of UPF0741 protein BcerKBAB4_5177 from Bacillus mycoides (strain KBAB4) (Bacillus weihenstephanensis).